The chain runs to 372 residues: DNA replication and repair protein RecF (372 aa).

Residue 30-37 participates in ATP binding; the sequence is GENAQGKT.

It belongs to the RecF family.

Its subcellular location is the cytoplasm. Functionally, the RecF protein is involved in DNA metabolism; it is required for DNA replication and normal SOS inducibility. RecF binds preferentially to single-stranded, linear DNA. It also seems to bind ATP. In Geobacillus thermodenitrificans (strain NG80-2), this protein is DNA replication and repair protein RecF.